The following is a 343-amino-acid chain: LRP2-binding protein (343 aa).

The TPR repeat unit spans residues S58 to A91. Sel1-like repeat units lie at residues L92 to S124, Y132 to N167, V172 to S205, L206 to S241, V242 to D273, and A293 to P328.

It is found in the cytoplasm. May act as an adapter that regulates LRP2 function. This chain is LRP2-binding protein (lrp2bp), found in Danio rerio (Zebrafish).